A 225-amino-acid chain; its full sequence is Pathogenesis-related 5 protein Jun a 3.0101 (225 aa).

The N-terminal stretch at 1–26 (MARVSELAFLLAATLAISLHMQEAGV) is a signal peptide. 8 disulfide bridges follow: Cys35–Cys224, Cys76–Cys86, Cys91–Cys97, Cys139–Cys213, Cys144–Cys197, Cys152–Cys162, Cys166–Cys175, and Cys176–Cys184. 3 igE-binding regions span residues 146–157 (ADINAVCPSELK), 158–170 (VDGG…NVFK), and 178–191 (NAYV…NYSK).

It belongs to the thaumatin family. In terms of tissue distribution, expressed in pollen (at protein level).

The protein is Pathogenesis-related 5 protein Jun a 3.0101 of Juniperus ashei (Ozark white cedar).